We begin with the raw amino-acid sequence, 379 residues long: Cobalt-precorrin-5B C(1)-methyltransferase (379 aa).

It belongs to the CbiD family.

The catalysed reaction is Co-precorrin-5B + S-adenosyl-L-methionine = Co-precorrin-6A + S-adenosyl-L-homocysteine. It functions in the pathway cofactor biosynthesis; adenosylcobalamin biosynthesis; cob(II)yrinate a,c-diamide from sirohydrochlorin (anaerobic route): step 6/10. In terms of biological role, catalyzes the methylation of C-1 in cobalt-precorrin-5B to form cobalt-precorrin-6A. The polypeptide is Cobalt-precorrin-5B C(1)-methyltransferase (Salmonella typhimurium (strain LT2 / SGSC1412 / ATCC 700720)).